The primary structure comprises 191 residues: Putative acetyltransferase DDB_G0280825 (191 aa).

The protein belongs to the transferase hexapeptide repeat family.

In Dictyostelium discoideum (Social amoeba), this protein is Putative acetyltransferase DDB_G0280825.